A 234-amino-acid chain; its full sequence is Transcriptional regulatory protein CitB (234 aa).

The Response regulatory domain maps to 5–121 (TTLIVEDEPM…RLQHTLERFA (117 aa)). 4-aspartylphosphate is present on aspartate 56. A DNA-binding region (H-T-H motif) is located at residues 181 to 200 (ADSLARILGSSKTTARRYLE).

In terms of assembly, in vitro CitB and the CitA kinase domain form a complex, formation of which is enhanced by ATP. In terms of processing, phosphorylated by CitA.

It is found in the cytoplasm. Its function is as follows. Member of the two-component regulatory system CitA/CitB essential for expression of citrate-specific fermentation genes. Phosphorylated CitB binds to two sites in the citS-citC intergenic region where it probably activates transcription of both genes. The polypeptide is Transcriptional regulatory protein CitB (citB) (Klebsiella pneumoniae).